A 465-amino-acid chain; its full sequence is Flavin-containing monooxygenase FMO GS-OX-like 2 (465 aa).

18-23 provides a ligand contact to FAD; sequence GAGAAG. Residue 217–222 participates in NADP(+) binding; that stretch reads GSSASG.

Belongs to the FMO family. It depends on FAD as a cofactor.

Functionally, catalyzes the conversion of methylthioalkyl glucosinolates of any chain length into methylsulfinylalkyl glucosinolates. In Arabidopsis thaliana (Mouse-ear cress), this protein is Flavin-containing monooxygenase FMO GS-OX-like 2.